The following is a 790-amino-acid chain: MAQQQGQGAGTTTVAMMSRNPSYYYSGEGELSLAVQRQDSLYRDASRAGQHEQAHGEGWARTLRLAFQCFGVLYGDIGTSPLYVYSTTFDGGIRHTDDLLGVLSLIIYSFLLFTIIKYVYIALRANDDGDGGTFALYSLISRHAKVSLVPNQQAEDELHLHISKSSSLRRPSVQRLASTAEERAQWVKDLLENSRPVRISLFLLTILATAMVISDACLTPAISVLSAVGGLKDKAPHLNTEQVVWVTVGILVMLFAVQRFGTDKVGYLFAPVVLLWLLLIGGVGVYNLAAHDVGVLRAFNPKYILDYFRRNGRHGWVSLGGVLLCFTGTEALFADLGCFSIRSIQLSFAFGLVPAVLLAYAGQAAYLRVYPDHVGDAFYASTPQVLFWPTLVLALAASVVGSQAMISCAFATISHSQAMGCFPRVKVVHTSRQYQGQVYIPEINLLLGAAACVVTVAARDTVVIGEAHGICVVLVMLITTLLLTVVMVLVWRVNIGWVLVFACVFASTESVYLTSVLYKFAHGGYIPVAMSAVLMGVMGVWHYVHVRRYKYEMERTVSTERVRELVSRRELQRVPGVGLFYTDLVQGIPPVFPHLIDKIPSIHTVLLFVSVKHLPVPHVDPSERFLFRQVEPQEHKLFRCVARYGYRDRLEDARDFVANLVERLQYYVRDVNLYGAAANNKVSYPSSRCDSMGIPKSASYAERLQLQRARSVAMLHSHSQHQRFIQREMEKGVVFILGESEVVARPHSSLLKKLVVNYAYSFLRRNCRQGDKMLAIPRSQLLKVGMSYEI.

At 1 to 64 the chain is on the cytoplasmic side; it reads MAQQQGQGAG…HGEGWARTLR (64 aa). The chain crosses the membrane as a helical span at residues 65-85; it reads LAFQCFGVLYGDIGTSPLYVY. The Extracellular segment spans residues 86–98; it reads STTFDGGIRHTDD. A helical membrane pass occupies residues 99–119; the sequence is LLGVLSLIIYSFLLFTIIKYV. Residues 120–198 lie on the Cytoplasmic side of the membrane; it reads YIALRANDDG…DLLENSRPVR (79 aa). The helical transmembrane segment at 199-219 threads the bilayer; sequence ISLFLLTILATAMVISDACLT. The Extracellular portion of the chain corresponds to 220–236; sequence PAISVLSAVGGLKDKAP. Residues 237-257 traverse the membrane as a helical segment; it reads HLNTEQVVWVTVGILVMLFAV. Topologically, residues 258-264 are cytoplasmic; the sequence is QRFGTDK. Residues 265–285 form a helical membrane-spanning segment; it reads VGYLFAPVVLLWLLLIGGVGV. Over 286–318 the chain is Extracellular; the sequence is YNLAAHDVGVLRAFNPKYILDYFRRNGRHGWVS. A helical transmembrane segment spans residues 319-339; sequence LGGVLLCFTGTEALFADLGCF. Residues 340–345 lie on the Cytoplasmic side of the membrane; the sequence is SIRSIQ. Residues 346 to 366 form a helical membrane-spanning segment; sequence LSFAFGLVPAVLLAYAGQAAY. At 367–385 the chain is on the extracellular side; it reads LRVYPDHVGDAFYASTPQV. Residues 386–406 traverse the membrane as a helical segment; that stretch reads LFWPTLVLALAASVVGSQAMI. Topologically, residues 407–437 are cytoplasmic; it reads SCAFATISHSQAMGCFPRVKVVHTSRQYQGQ. Residues 438–458 form a helical membrane-spanning segment; it reads VYIPEINLLLGAAACVVTVAA. Over 459 to 469 the chain is Extracellular; the sequence is RDTVVIGEAHG. Residues 470-490 form a helical membrane-spanning segment; that stretch reads ICVVLVMLITTLLLTVVMVLV. The Cytoplasmic portion of the chain corresponds to 491 to 492; that stretch reads WR. The helical transmembrane segment at 493 to 513 threads the bilayer; that stretch reads VNIGWVLVFACVFASTESVYL. At 514 to 519 the chain is on the extracellular side; sequence TSVLYK. Residues 520 to 540 form a helical membrane-spanning segment; sequence FAHGGYIPVAMSAVLMGVMGV. At 541–790 the chain is on the cytoplasmic side; the sequence is WHYVHVRRYK…LLKVGMSYEI (250 aa).

It belongs to the HAK/KUP transporter (TC 2.A.72.3) family.

The protein resides in the membrane. Its function is as follows. High-affinity potassium transporter. This Oryza sativa subsp. japonica (Rice) protein is Potassium transporter 22 (HAK22).